The following is a 168-amino-acid chain: Phospholipase A and acyltransferase 1 (168 aa).

The Cytoplasmic segment spans residues 1 to 138; the sequence is MAFNDCFSLN…GEGVSEQANR (138 aa). An LRAT domain is found at 20–135; sequence LIEVFRPGYQ…LRYGEGVSEQ (116 aa). H30 is an active-site residue. Residue C119 is the Acyl-thioester intermediate of the active site. Residues 139–159 form a helical membrane-spanning segment; sequence AISTVEFVTAAVGVFSFLGLF. Over 160-168 the chain is Lumenal; the sequence is PKGQRAKYY.

It belongs to the H-rev107 family. In terms of tissue distribution, abundantly expressed in testis, skeletal muscle, brain, and heart. As to expression, highly expressed in the testis, skeletal muscle, brain, heart, and thyroid.

It localises to the membrane. The protein resides in the cytoplasm. Its subcellular location is the nucleus. The enzyme catalyses a 1,2-diacyl-sn-glycero-3-phosphocholine + H2O = a 1-acyl-sn-glycero-3-phosphocholine + a fatty acid + H(+). The catalysed reaction is a 1,2-diacyl-sn-glycero-3-phosphocholine + H2O = a 2-acyl-sn-glycero-3-phosphocholine + a fatty acid + H(+). It catalyses the reaction 1,2-dihexadecanoyl-sn-glycero-3-phosphocholine + H2O = 2-hexadecanoyl-sn-glycero-3-phosphocholine + hexadecanoate + H(+). It carries out the reaction 1,2-dihexadecanoyl-sn-glycero-3-phosphocholine + H2O = 1-hexadecanoyl-sn-glycero-3-phosphocholine + hexadecanoate + H(+). The enzyme catalyses 1-hexadecanoyl-2-(5Z,8Z,11Z,14Z-eicosatetraenoyl)-sn-glycero-3-phosphoethanolamine + H2O = 2-(5Z,8Z,11Z,14Z)-eicosatetraenoyl-sn-glycero-3-phosphoethanolamine + hexadecanoate + H(+). The catalysed reaction is 1-hexadecanoyl-2-(5Z,8Z,11Z,14Z-eicosatetraenoyl)-sn-glycero-3-phosphoethanolamine + H2O = 1-hexadecanoyl-sn-glycero-3-phosphoethanolamine + (5Z,8Z,11Z,14Z)-eicosatetraenoate + H(+). It catalyses the reaction 1,2-di-(9Z-octadecenoyl)-sn-glycero-3-phosphoethanolamine + 1,2-dihexadecanoyl-sn-glycero-3-phosphocholine = hexadecanoyl-sn-glycero-3-phosphocholine + N-hexadecanoyl-1,2-di-(9Z-octadecenoyl)-sn-glycero-3-phosphoethanolamine + H(+). It carries out the reaction 1,2-dihexadecanoyl-sn-glycero-3-phosphocholine + a 2-acyl-sn-glycero-3-phosphocholine = a 1-hexadecanoyl-2-acyl-sn-glycero-3-phosphocholine + 2-hexadecanoyl-sn-glycero-3-phosphocholine. Functionally, exhibits both phospholipase A1/2 and acyltransferase activities. Shows phospholipase A1 (PLA1) and A2 (PLA2) activity, catalyzing the calcium-independent release of fatty acids from the sn-1 or sn-2 position of glycerophospholipids. Shows O-acyltransferase activity, catalyzing the transfer of a fatty acyl group from glycerophospholipid to the hydroxyl group of lysophospholipid. Shows N-acyltransferase activity, catalyzing the calcium-independent transfer of a fatty acyl group at the sn-1 position of phosphatidylcholine (PC) and other glycerophospholipids to the primary amine of phosphatidylethanolamine (PE), forming N-acylphosphatidylethanolamine (NAPE) which serves as precursor for N-acylethanolamines (NAEs). This is Phospholipase A and acyltransferase 1 from Homo sapiens (Human).